The following is a 206-amino-acid chain: Ras-related protein Rab-18 (206 aa).

Residues Ser-17, Gly-20, Lys-21, Ser-22, Ser-23, Asp-34, Pro-35, Thr-40, Gly-66, Lys-123, Asp-125, and Ala-152 each contribute to the GTP site. Position 22 (Ser-22) interacts with Mg(2+). 2 short sequence motifs (switch) span residues 31–45 and 63–80; these read DTFDPELAATIGVDF and DTAGQERFRTLTPSYYRG. Mg(2+) is bound at residue Thr-40. A lipid anchor (S-palmitoyl cysteine) is attached at Cys-199. Cys-203 is modified (cysteine methyl ester). A lipid anchor (S-geranylgeranyl cysteine) is attached at Cys-203. Positions 204–206 are cleaved as a propeptide — removed in mature form; the sequence is SML.

Belongs to the small GTPase superfamily. Rab family. Requires Mg(2+) as cofactor.

The protein resides in the endoplasmic reticulum membrane. The protein localises to the golgi apparatus. Its subcellular location is the cis-Golgi network membrane. It localises to the lipid droplet. It is found in the apical cell membrane. It carries out the reaction GTP + H2O = GDP + phosphate + H(+). Regulated by guanine nucleotide exchange factors (GEFs) which promote the exchange of bound GDP for free GTP. Regulated by GTPase activating proteins (GAPs) which increase the GTP hydrolysis activity at the ER membrane. Inhibited by GDP dissociation inhibitors (GDIs) which prevent Rab-GDP dissociation. Functionally, the small GTPases Rab are key regulators of intracellular membrane trafficking, from the formation of transport vesicles to their fusion with membranes. Rabs cycle between an inactive GDP-bound form and an active GTP-bound form that is able to recruit to membranes different sets of downstream effectors directly responsible for vesicle formation, movement, tethering and fusion. RAB18 is required for the localization of ZFYVE1 to lipid droplets and for its function in mediating the formation of endoplasmic reticulum-lipid droplets (ER-LD) contacts. Also required for maintaining endoplasmic reticulum structure. Plays a role in apical endocytosis/recycling. Plays a key role in eye and brain development and neurodegeneration. The polypeptide is Ras-related protein Rab-18 (RAB18) (Gallus gallus (Chicken)).